We begin with the raw amino-acid sequence, 58 residues long: UPF0391 membrane protein Patl_4137 (58 aa).

The next 2 membrane-spanning stretches (helical) occupy residues 4 to 24 (WALTFLIIAILAGVMGFGGIA) and 27 to 47 (AAGIAKIIFFVFLVLLVLSLV).

Belongs to the UPF0391 family.

It localises to the cell membrane. This is UPF0391 membrane protein Patl_4137 from Pseudoalteromonas atlantica (strain T6c / ATCC BAA-1087).